The following is a 338-amino-acid chain: Ketol-acid reductoisomerase (NADP(+)) (338 aa).

A KARI N-terminal Rossmann domain is found at M1–T181. NADP(+) contacts are provided by residues Y24 to Q27, R47, and S52. H107 is a catalytic residue. G133 contributes to the NADP(+) binding site. Positions N182–I327 constitute a KARI C-terminal knotted domain. Positions 190, 194, 226, and 230 each coordinate Mg(2+). S251 lines the substrate pocket.

The protein belongs to the ketol-acid reductoisomerase family. Mg(2+) is required as a cofactor.

It catalyses the reaction (2R)-2,3-dihydroxy-3-methylbutanoate + NADP(+) = (2S)-2-acetolactate + NADPH + H(+). The enzyme catalyses (2R,3R)-2,3-dihydroxy-3-methylpentanoate + NADP(+) = (S)-2-ethyl-2-hydroxy-3-oxobutanoate + NADPH + H(+). It participates in amino-acid biosynthesis; L-isoleucine biosynthesis; L-isoleucine from 2-oxobutanoate: step 2/4. The protein operates within amino-acid biosynthesis; L-valine biosynthesis; L-valine from pyruvate: step 2/4. Its function is as follows. Involved in the biosynthesis of branched-chain amino acids (BCAA). Catalyzes an alkyl-migration followed by a ketol-acid reduction of (S)-2-acetolactate (S2AL) to yield (R)-2,3-dihydroxy-isovalerate. In the isomerase reaction, S2AL is rearranged via a Mg-dependent methyl migration to produce 3-hydroxy-3-methyl-2-ketobutyrate (HMKB). In the reductase reaction, this 2-ketoacid undergoes a metal-dependent reduction by NADPH to yield (R)-2,3-dihydroxy-isovalerate. The sequence is that of Ketol-acid reductoisomerase (NADP(+)) from Burkholderia cenocepacia (strain HI2424).